Here is a 158-residue protein sequence, read N- to C-terminus: NAD(P)H-quinone oxidoreductase subunit J, chloroplastic (158 aa).

This sequence belongs to the complex I 30 kDa subunit family. As to quaternary structure, NDH is composed of at least 16 different subunits, 5 of which are encoded in the nucleus.

The protein localises to the plastid. Its subcellular location is the chloroplast thylakoid membrane. It carries out the reaction a plastoquinone + NADH + (n+1) H(+)(in) = a plastoquinol + NAD(+) + n H(+)(out). The enzyme catalyses a plastoquinone + NADPH + (n+1) H(+)(in) = a plastoquinol + NADP(+) + n H(+)(out). In terms of biological role, NDH shuttles electrons from NAD(P)H:plastoquinone, via FMN and iron-sulfur (Fe-S) centers, to quinones in the photosynthetic chain and possibly in a chloroplast respiratory chain. The immediate electron acceptor for the enzyme in this species is believed to be plastoquinone. Couples the redox reaction to proton translocation, and thus conserves the redox energy in a proton gradient. The polypeptide is NAD(P)H-quinone oxidoreductase subunit J, chloroplastic (Helianthus annuus (Common sunflower)).